A 234-amino-acid chain; its full sequence is Endonuclease V (234 aa).

Positions 42 and 108 each coordinate Mg(2+).

This sequence belongs to the endonuclease V family. It depends on Mg(2+) as a cofactor.

The protein localises to the cytoplasm. It carries out the reaction Endonucleolytic cleavage at apurinic or apyrimidinic sites to products with a 5'-phosphate.. Its function is as follows. DNA repair enzyme involved in the repair of deaminated bases. Selectively cleaves double-stranded DNA at the second phosphodiester bond 3' to a deoxyinosine leaving behind the intact lesion on the nicked DNA. This Geotalea uraniireducens (strain Rf4) (Geobacter uraniireducens) protein is Endonuclease V.